The sequence spans 20 residues: Protein PR-L6 (20 aa).

The protein belongs to the BetVI family.

This is Protein PR-L6 from Lupinus luteus (European yellow lupine).